The primary structure comprises 238 residues: tRNA (guanine-N(1)-)-methyltransferase (238 aa).

Residues G110 and L129–L134 each bind S-adenosyl-L-methionine.

It belongs to the RNA methyltransferase TrmD family. Homodimer.

Its subcellular location is the cytoplasm. The enzyme catalyses guanosine(37) in tRNA + S-adenosyl-L-methionine = N(1)-methylguanosine(37) in tRNA + S-adenosyl-L-homocysteine + H(+). Functionally, specifically methylates guanosine-37 in various tRNAs. This is tRNA (guanine-N(1)-)-methyltransferase from Clostridium botulinum (strain Eklund 17B / Type B).